The primary structure comprises 290 residues: Aquaporin-12 (290 aa).

The next 2 helical transmembrane spans lie at 1–21 and 67–87; these read MASL…CEVA and FGPD…GVTF. An NPA 1 motif is present at residues 93-95; it reads NPT. 3 helical membrane passes run 112–138, 158–178, and 191–211; these read LLKL…WELS, SVLQ…LSLL, and ALAL…SAFF. Residues 212–214 carry the NPA 2 motif; it reads NPA. A helical transmembrane segment spans residues 228 to 248; that stretch reads LLEYAHVYCLGPVAGMILAVL. The tract at residues 271 to 290 is disordered; it reads RTPRGKLSPGSVDAKMHKGE.

This sequence belongs to the MIP/aquaporin (TC 1.A.8) family. AQP11/AQP12 subfamily. In terms of tissue distribution, restricted to pancreatic acinar cells.

The protein resides in the membrane. Its function is as follows. Aquaporins facilitate the transport of water and small neutral solutes across cell membranes. This is Aquaporin-12 (Aqp12) from Mus musculus (Mouse).